Consider the following 267-residue polypeptide: Cytochrome b (267 aa).

The next 4 helical transmembrane spans lie at 4-24 (FGSLLGICLMTQILTGLLLAA), 48-69 (WLIRNLHANGASFFFICIYLHI), 84-104 (WNTGVILLLTLMATAFVGYVL), and 149-169 (FFTLHFLLPFMIAGLTIIHLT). Heme b contacts are provided by His54 and His68. Heme b-binding residues include His153 and His167. His172 contacts a ubiquinone. Helical transmembrane passes span 197-217 (LKDILGFTLMFLPLMTLALFA) and 259-267 (LGGVLALAA).

Belongs to the cytochrome b family. In terms of assembly, the cytochrome bc1 complex contains 11 subunits: 3 respiratory subunits (MT-CYB, CYC1 and UQCRFS1), 2 core proteins (UQCRC1 and UQCRC2) and 6 low-molecular weight proteins (UQCRH/QCR6, UQCRB/QCR7, UQCRQ/QCR8, UQCR10/QCR9, UQCR11/QCR10 and a cleavage product of UQCRFS1). This cytochrome bc1 complex then forms a dimer. Heme b serves as cofactor.

It localises to the mitochondrion inner membrane. Functionally, component of the ubiquinol-cytochrome c reductase complex (complex III or cytochrome b-c1 complex) that is part of the mitochondrial respiratory chain. The b-c1 complex mediates electron transfer from ubiquinol to cytochrome c. Contributes to the generation of a proton gradient across the mitochondrial membrane that is then used for ATP synthesis. This Raphus cucullatus (Dodo) protein is Cytochrome b (MT-CYB).